The following is a 570-amino-acid chain: MDIFRLLTRGASVKKDPKNKNIGDAVENAKASNIEKNDKIAAENQITKELDFFHNKRIINKVNYNKAKETHAEDKEDKDNDNEEDEIKEEESLQYQKPLITNDEEAKLLRKSNKSNVSGEDIPLPIGSFEDLITRFSFDKRLLNNLILNHFTEPTPIQCEAIPLALNNRDMLACAPTGSGKTLAFLIPLIQQVINDKDTQGLKGLIISPTKELANQIFLECIKLSNRIFLDKKRPLQVALLSKSLSAKLRNKVISDKKYDIIVSTPLRLIDVVKNEALDLSQVKHLIFDEADKLFDKTFVEQSDDILSSCSHSSLRKSMFSATIPSNVEEIAKSIMMDPVRVIIGHKEAANTSIEQKLVFCGNEEGKLIAIKQLVQEGEFKPPVIIFLESITRAKALYHEMMYDSLNVDVIHAERTQVQRNKIIERFKSGDLWCLITTDVLARGVDFKGVNLVINYDVPRTAQAYVHRIGRTGRGGRSGKAVTFYTKEDSIAIKPIINVMKQSGSEISEWMEKVSKMTKKEKELVKKGRAHSERKQISTVPKIDKIKRKRKLEMIQASKKRKAIETKETE.

A compositionally biased stretch (basic and acidic residues) spans 69–78 (ETHAEDKEDK). The disordered stretch occupies residues 69 to 96 (ETHAEDKEDKDNDNEEDEIKEEESLQYQ). A compositionally biased stretch (acidic residues) spans 79-89 (DNDNEEDEIKE). The short motif at 131-159 (DLITRFSFDKRLLNNLILNHFTEPTPIQC) is the Q motif element. One can recognise a Helicase ATP-binding domain in the interval 162 to 342 (IPLALNNRDM…KSIMMDPVRV (181 aa)). 175 to 182 (APTGSGKT) lines the ATP pocket. The DEAD box signature appears at 289–292 (DEAD). The region spanning 353-515 (SIEQKLVFCG…EISEWMEKVS (163 aa)) is the Helicase C-terminal domain.

Belongs to the DEAD box helicase family. DDX52/ROK1 subfamily. As to quaternary structure, interacts with the U3 snoRNA and is associated with the 90S and 40S pre-ribosomes.

The protein resides in the nucleus. It is found in the nucleolus. It carries out the reaction ATP + H2O = ADP + phosphate + H(+). Functionally, ATP-dependent RNA helicase involved in 40S ribosomal subunit biogenesis. Required for the processing and cleavage of 35S pre-rRNA at sites A0, A1, and A2, leading to mature 18S rRNA. In Vanderwaltozyma polyspora (strain ATCC 22028 / DSM 70294 / BCRC 21397 / CBS 2163 / NBRC 10782 / NRRL Y-8283 / UCD 57-17) (Kluyveromyces polysporus), this protein is ATP-dependent RNA helicase ROK1 (ROK1).